Consider the following 293-residue polypeptide: Microtubule-associated protein RP/EB family member 1B (293 aa).

The Calponin-homology (CH) domain maps to 13–115 (FVGRNEILSW…FLQWLKRFCD (103 aa)). Disordered stretches follow at residues 124 to 188 (ENYN…SAEV) and 262 to 293 (LGLE…ETQT). Positions 129-141 (VERRSRGGREKSV) are enriched in basic and acidic residues. The segment covering 151–166 (LQTNNMHHPPVATSNK) has biased composition (polar residues). The region spanning 180-250 (GGSNSSAEVQ…LYATDANESV (71 aa)) is the EB1 C-terminal domain. Residues 266-285 (GYEEEGKEEEEEEEEEEEEA) are compositionally biased toward acidic residues.

It belongs to the MAPRE family. Homodimer and heterodimer with EB1A. As to expression, highly expressed in guard cells of leaf stomata, pollen grains and pollen tubes. Expressed in young roots.

The protein localises to the cytoplasm. It localises to the cytoskeleton. Its subcellular location is the spindle pole. It is found in the phragmoplast. Its function is as follows. Binds to the plus end of microtubules and regulates the dynamics of the microtubule cytoskeleton. May be involved in anchoring microtubules to their nucleation sites and/or functioning as a reservoir for distribution to the growing end. In plants, microtubule minus ends are not necessarily severed from the nucleation site and transported to the plus end of a microtubule as part of the recycling process. May play a role in endomembrane organization during polarized growth of plant cells. In Arabidopsis thaliana (Mouse-ear cress), this protein is Microtubule-associated protein RP/EB family member 1B (EB1B).